Consider the following 290-residue polypeptide: Nucleotide-binding protein XfasM23_0667 (290 aa).

Position 13-20 (13-20 (GLSGSGKS)) interacts with ATP. 65–68 (DIRS) serves as a coordination point for GTP.

It belongs to the RapZ-like family.

Functionally, displays ATPase and GTPase activities. The protein is Nucleotide-binding protein XfasM23_0667 of Xylella fastidiosa (strain M23).